A 131-amino-acid chain; its full sequence is MATVPTRSGSPRQLTTKQTGDAWEAQARRWLEGKGLRFIAANVNERGGEIDLIMREGLTTVFVEVRYRRSALYGGAAASVTRSKQHKLLQTARLWLARHNGSFDTVDCRFDVVAFTGNEVEWIKDAFNDHS.

Residues 1–19 (MATVPTRSGSPRQLTTKQT) show a composition bias toward polar residues. The disordered stretch occupies residues 1–21 (MATVPTRSGSPRQLTTKQTGD).

It belongs to the UPF0102 family.

This chain is UPF0102 protein YraN, found in Shigella flexneri serotype 5b (strain 8401).